A 582-amino-acid chain; its full sequence is Hydrogen peroxide stress regulator 1 (582 aa).

Disordered stretches follow at residues 24–55 (SPFAPAQSSSPLPSNSCREYSLPSHPSTHNSS), 107–154 (YPSA…GISK), 347–366 (TSYNDTPQQSVTGSYNSGET), and 375–422 (NTSG…GGKS). Positions 107–125 (YPSASFSTSQHPSQVYNDG) are enriched in polar residues. Residues 126-143 (STLNSNNTTQQLNNNNGF) are compositionally biased toward low complexity. Residues 375–392 (NTSGRSPNSMEATEQIGT) show a composition bias toward polar residues. The segment at 423–446 (FVCPECSKKFKRSEHLRRHIRSLH) adopts a C2H2-type 1 zinc-finger fold. The segment at 452-473 (FVCICGKRFSRRDNLRQHERLH) adopts a C2H2-type 2; atypical zinc-finger fold.

The protein localises to the nucleus. Transcription factor that globally supports gene expression in response to hydrogen peroxide. The protein is Hydrogen peroxide stress regulator 1 (hsr1) of Schizosaccharomyces pombe (strain 972 / ATCC 24843) (Fission yeast).